The following is a 188-amino-acid chain: UPF0157 protein DR_2534 (188 aa).

Positions 1 to 12 (MGRGGRGVGGGR) are enriched in gly residues. The tract at residues 1–37 (MGRGGRGVGGGRPEGHGASVEGGRTRQTEGMDLISPD) is disordered.

It belongs to the UPF0157 (GrpB) family.

This chain is UPF0157 protein DR_2534, found in Deinococcus radiodurans (strain ATCC 13939 / DSM 20539 / JCM 16871 / CCUG 27074 / LMG 4051 / NBRC 15346 / NCIMB 9279 / VKM B-1422 / R1).